Consider the following 998-residue polypeptide: Methyl sulfide methyltransferase-associated sensor (998 aa).

Positions 40 to 77 constitute a PAS 1 domain; sequence FGYSPKDFISGGLGYADIIYPADLEIAVSQFFSYVEKD. In terms of domain architecture, PAC 1 spans 117-169; sequence FTQQYRLLNKSGDVLWVEAEIKVLEEEEGKAGLFQVTVFDISRWKHTEKAMPA. A PAS 2 domain is found at 209-246; it reads LGYTPEDFTSGRIVYTDIIHPDDLDNVRAEVSKNTEEG. The PAC 2 domain occupies 250 to 302; the sequence is FSKEYRVLAKSGEVRYVDERTLIRRNEKGEITCYQGILLDITQRKEAEELILS. Residues 314-458 form the GAF 1 domain; that stretch reads ASLDEVLLLL…NAYLAGIAIE (145 aa). The region spanning 469-540 is the PAS 3 domain; that stretch reads SENRFRTIFD…ENMQKIKAEG (72 aa). The GAF 2 domain occupies 609 to 752; it reads ASLKEITDFA…LMQGMWQLIQ (144 aa). Cys656 lines the heme pocket. The 216-residue stretch at 783–998 folds into the Histidine kinase domain; that stretch reads EFVEEMMFPE…GNLMHVKLPK (216 aa).

Heme serves as cofactor. Post-translationally, autophosphorylates: autophosphorylation is dependent on the redox state of heme cofactor and is promoted upon reduction.

It is found in the cytoplasm. The enzyme catalyses ATP + protein L-histidine = ADP + protein N-phospho-L-histidine.. Functionally, heme-binding sensor kinase component part of a two-component regulatory system involved in methyl sulfide metabolism. Does not act as a phytochrome-like photoreceptor. The sequence is that of Methyl sulfide methyltransferase-associated sensor (msmS) from Methanosarcina acetivorans (strain ATCC 35395 / DSM 2834 / JCM 12185 / C2A).